The primary structure comprises 122 residues: Alkaline proteinase inhibitor (122 aa).

Positions 1 to 25 (MPRFSHLIGCVWQVLFVSAGAQAMA) are cleaved as a signal peptide. Residues 101–122 (QKEGEYTGRTPSGADVTLQRTN) are disordered.

Belongs to the protease inhibitor I38 family.

Its subcellular location is the periplasm. Functionally, inhibitor of the alkaline protease. This is Alkaline proteinase inhibitor (inh) from Pseudomonas tolaasii.